The following is a 474-amino-acid chain: tRNA-2-methylthio-N(6)-dimethylallyladenosine synthase (474 aa).

The MTTase N-terminal domain occupies 3 to 120 (KKLHIKTWGC…LPEMIEQVRR (118 aa)). [4Fe-4S] cluster contacts are provided by cysteine 12, cysteine 49, cysteine 83, cysteine 157, cysteine 161, and cysteine 164. One can recognise a Radical SAM core domain in the interval 143 to 375 (RAEGPTAFVS…QDRITQQAMR (233 aa)). Residues 378–441 (RHMMGTVQRI…TNSLRGKFIR (64 aa)) enclose the TRAM domain.

The protein belongs to the methylthiotransferase family. MiaB subfamily. Monomer. The cofactor is [4Fe-4S] cluster.

Its subcellular location is the cytoplasm. It catalyses the reaction N(6)-dimethylallyladenosine(37) in tRNA + (sulfur carrier)-SH + AH2 + 2 S-adenosyl-L-methionine = 2-methylsulfanyl-N(6)-dimethylallyladenosine(37) in tRNA + (sulfur carrier)-H + 5'-deoxyadenosine + L-methionine + A + S-adenosyl-L-homocysteine + 2 H(+). Functionally, catalyzes the methylthiolation of N6-(dimethylallyl)adenosine (i(6)A), leading to the formation of 2-methylthio-N6-(dimethylallyl)adenosine (ms(2)i(6)A) at position 37 in tRNAs that read codons beginning with uridine. This Shewanella oneidensis (strain ATCC 700550 / JCM 31522 / CIP 106686 / LMG 19005 / NCIMB 14063 / MR-1) protein is tRNA-2-methylthio-N(6)-dimethylallyladenosine synthase.